A 568-amino-acid polypeptide reads, in one-letter code: MPSTDLLMLKAFEPYLEILEVYSTKAKNYVNGHCTKYEPWQLIAWSVVWTLLIVWGYEFVFQPESLWSRFKKKCFKLTRKMPIIGRKIQDKLNKTKDDISKNMSFLKVDKEYVKALPSQGLSSSAVLEKLKEYSSMDAFWQEGRASGTVYSGEEKLTELLVKAYGDFAWSNPLHPDIFPGLRKIEAEIVRIACSLFNGGPDSCGCVTSGGTESILMACKAYRDLAFEKGIKTPEIVAPQSAHAAFNKAASYFGMKIVRVPLTKMMEVDVRAMRRAISRNTAMLVCSTPQFPHGVIDPVPEVAKLAVKYKIPLHVDACLGGFLIVFMEKAGYPLEHPFDFRVKGVTSISADTHKYGYAPKGSSLVLYSDKKYRNYQFFVDTDWQGGIYASPTIAGSRPGGISAACWAALMHFGENGYVEATKQIIKTARFLKSELENIKGIFVFGNPQLSVIALGSRDFDIYRLSNLMTAKGWNLNQLQFPPSIHFCITLLHARKRVAIQFLKDIRESVTQIMKNPKAKTTGMGAIYGMAQTTVDRNMVAELSSVFLDSLYSTDTVTQGSQMNGSPKPH.

Residues 1 to 40 lie on the Lumenal side of the membrane; the sequence is MPSTDLLMLKAFEPYLEILEVYSTKAKNYVNGHCTKYEPW. A helical; Signal-anchor for type III membrane protein transmembrane segment spans residues 41–61; the sequence is QLIAWSVVWTLLIVWGYEFVF. The Cytoplasmic segment spans residues 62 to 568; that stretch reads QPESLWSRFK…SQMNGSPKPH (507 aa). Lysine 353 bears the N6-(pyridoxal phosphate)lysine; alternate mark. Lysine 353 carries the N6-acetyllysine; alternate modification. Residues tyrosine 356 and tyrosine 366 each carry the 3'-nitrotyrosine modification. At serine 564 the chain carries Phosphoserine.

This sequence belongs to the group II decarboxylase family. Sphingosine-1-phosphate lyase subfamily. Homodimer. It depends on pyridoxal 5'-phosphate as a cofactor. Ubiquitously expressed. Expressed in fetal and adult adrenal gland (at protein level).

The protein resides in the endoplasmic reticulum membrane. The catalysed reaction is sphinganine 1-phosphate = hexadecanal + phosphoethanolamine. It carries out the reaction sphing-4-enine 1-phosphate = (2E)-hexadecenal + phosphoethanolamine. The protein operates within lipid metabolism; sphingolipid metabolism. In terms of biological role, cleaves phosphorylated sphingoid bases (PSBs), such as sphingosine-1-phosphate, into fatty aldehydes and phosphoethanolamine. Elevates stress-induced ceramide production and apoptosis. Required for global lipid homeostasis in liver and cholesterol homeostasis in fibroblasts. Involved in the regulation of pro-inflammatory response and neutrophil trafficking. Modulates neuronal autophagy via phosphoethanolamine production which regulates accumulation of aggregate-prone proteins such as APP. Seems to play a role in establishing neuronal contact sites and axonal maintenance. The polypeptide is Sphingosine-1-phosphate lyase 1 (Homo sapiens (Human)).